The primary structure comprises 327 residues: Endo-1,4-beta-xylanase A (327 aa).

One can recognise a GH10 domain in the interval 1–323; it reads AASGLEAAMK…KPSYTSTLNT (323 aa). A disulfide bridge links cysteine 81 with cysteine 123. N-linked (GlcNAc...) asparagine glycosylation is present at asparagine 101. Glutamate 131 serves as the catalytic Proton donor. The active-site Nucleophile is the glutamate 245. A disulfide bridge connects residues cysteine 273 and cysteine 279.

The protein belongs to the glycosyl hydrolase 10 (cellulase F) family. Monomer.

The protein resides in the secreted. It localises to the extracellular space. The enzyme catalyses Endohydrolysis of (1-&gt;4)-beta-D-xylosidic linkages in xylans.. It functions in the pathway glycan degradation; xylan degradation. Catalyzes the hydrolysis of the internal glycosidic bonds in heteroxylans, releasing mainly xylobiose and xylotriose. Most active on oat-spelt xylan. The chain is Endo-1,4-beta-xylanase A from Fusarium oxysporum f. sp. lycopersici (strain 4287 / CBS 123668 / FGSC 9935 / NRRL 34936) (Fusarium vascular wilt of tomato).